The sequence spans 475 residues: Ankyrin repeat, SAM and basic leucine zipper domain-containing protein 1 (475 aa).

A disordered region spans residues Met-1–Gly-24. Phosphoserine is present on residues Ser-17, Ser-18, and Ser-20. ANK repeat units lie at residues Glu-45–Ser-74, Tyr-78–Phe-107, Asp-110–Val-144, Arg-148–Ala-177, Asn-181–Leu-210, and Asp-214–Gly-243. The region spanning Ser-272–Glu-334 is the SAM domain.

As to quaternary structure, interacts with DDX4, PIWIL1, RANBP9 and TDRD1.

The protein resides in the cytoplasm. Functionally, plays a central role during spermatogenesis by repressing transposable elements and preventing their mobilization, which is essential for the germline integrity. Acts via the piRNA metabolic process, which mediates the repression of transposable elements during meiosis by forming complexes composed of piRNAs and Piwi proteins and governs the methylation and subsequent repression of transposons. Its association with pi-bodies suggests a participation in the primary piRNAs metabolic process. Required prior to the pachytene stage to facilitate the production of multiple types of piRNAs, including those associated with repeats involved in the regulation of retrotransposons. May act by mediating protein-protein interactions during germ cell maturation. The chain is Ankyrin repeat, SAM and basic leucine zipper domain-containing protein 1 (ASZ1) from Neofelis nebulosa (Clouded leopard).